Reading from the N-terminus, the 152-residue chain is Lipoprotein signal peptidase (152 aa).

3 consecutive transmembrane segments (helical) span residues 5 to 25 (LFVL…FWIV), 61 to 81 (WFFV…LATH), and 84 to 104 (LNIW…GNFI). Catalysis depends on residues aspartate 114 and aspartate 130. The chain crosses the membrane as a helical span at residues 125-145 (IFNVADSYLTVGVILLLICLW).

The protein belongs to the peptidase A8 family.

The protein localises to the cell membrane. It catalyses the reaction Release of signal peptides from bacterial membrane prolipoproteins. Hydrolyzes -Xaa-Yaa-Zaa-|-(S,diacylglyceryl)Cys-, in which Xaa is hydrophobic (preferably Leu), and Yaa (Ala or Ser) and Zaa (Gly or Ala) have small, neutral side chains.. Its pathway is protein modification; lipoprotein biosynthesis (signal peptide cleavage). Its function is as follows. This protein specifically catalyzes the removal of signal peptides from prolipoproteins. The sequence is that of Lipoprotein signal peptidase from Streptococcus pyogenes serotype M1.